An 89-amino-acid polypeptide reads, in one-letter code: Small ribosomal subunit protein bS20 (89 aa).

Residues 1–26 (MANSAQARKRARQADGQRSHNASLRS) form a disordered region.

It belongs to the bacterial ribosomal protein bS20 family.

Binds directly to 16S ribosomal RNA. The chain is Small ribosomal subunit protein bS20 from Dechloromonas aromatica (strain RCB).